The chain runs to 937 residues: Molybdenum cofactor sulfurase (937 aa).

N6-(pyridoxal phosphate)lysine is present on Lys237. The active site involves Cys397. Disordered stretches follow at residues 633-710 (GQGK…RRIL), 756-795 (PSPS…KLNP), and 897-921 (KEGT…GGNG). Basic residues predominate over residues 638-652 (MTRHAKAHLQRHQHQ). An MOSC domain is found at 682–935 (TPPSPPDSDT…VRVGDVVRPS (254 aa)). Positions 756 to 767 (PSPSTPSASPSN) are enriched in low complexity. Gly residues predominate over residues 900 to 921 (TGMGMGTGTGTGTGTRSMGGNG).

This sequence belongs to the class-V pyridoxal-phosphate-dependent aminotransferase family. MOCOS subfamily. The cofactor is pyridoxal 5'-phosphate.

It catalyses the reaction Mo-molybdopterin + L-cysteine + AH2 = thio-Mo-molybdopterin + L-alanine + A + H2O. It participates in cofactor biosynthesis; molybdopterin biosynthesis. Functionally, sulfurates the molybdenum cofactor. Sulfation of molybdenum is essential for xanthine dehydrogenase (XDH) and aldehyde oxidase (ADO) enzymes in which molybdenum cofactor is liganded by 1 oxygen and 1 sulfur atom in active form. This is Molybdenum cofactor sulfurase (nit-13) from Neurospora crassa (strain ATCC 24698 / 74-OR23-1A / CBS 708.71 / DSM 1257 / FGSC 987).